The sequence spans 160 residues: MSEEKVFPMTAEGRDKLQAELEDLITRQRPEITNRIQIARSYGDLSENSEYQSAKDEQAFVEGRILTLKKMIENAEIIDPNATAADVVSLGKTVTFKELPDEEPETYAIVGSTESDPLAGKISNESAMAVALLDKKVGDKVSVPLPSGESIDVEILKVEK.

The protein belongs to the GreA/GreB family.

Necessary for efficient RNA polymerase transcription elongation past template-encoded arresting sites. The arresting sites in DNA have the property of trapping a certain fraction of elongating RNA polymerases that pass through, resulting in locked ternary complexes. Cleavage of the nascent transcript by cleavage factors such as GreA or GreB allows the resumption of elongation from the new 3'terminus. GreA releases sequences of 2 to 3 nucleotides. The chain is Transcription elongation factor GreA from Leuconostoc citreum (strain KM20).